Here is a 511-residue protein sequence, read N- to C-terminus: Probable DNA ligase (511 aa).

Glu-209 is a binding site for ATP. Lys-211 acts as the N6-AMP-lysine intermediate in catalysis. 6 residues coordinate ATP: Arg-216, Arg-231, Glu-260, Phe-299, Arg-371, and Lys-377.

The protein belongs to the ATP-dependent DNA ligase family. Mg(2+) serves as cofactor.

It catalyses the reaction ATP + (deoxyribonucleotide)n-3'-hydroxyl + 5'-phospho-(deoxyribonucleotide)m = (deoxyribonucleotide)n+m + AMP + diphosphate.. DNA ligase that seals nicks in double-stranded DNA during DNA replication, DNA recombination and DNA repair. The sequence is that of Probable DNA ligase from Mycolicibacterium gilvum (strain PYR-GCK) (Mycobacterium gilvum (strain PYR-GCK)).